The sequence spans 241 residues: Small ribosomal subunit protein uS3c (241 aa).

Belongs to the universal ribosomal protein uS3 family. As to quaternary structure, part of the 30S ribosomal subunit.

It localises to the plastid. The protein is Small ribosomal subunit protein uS3c (rps3) of Helicosporidium sp. subsp. Simulium jonesii (Green alga).